Reading from the N-terminus, the 138-residue chain is Pleckstrin homology-like domain family A member 2 (138 aa).

The region spanning 11–105 (VLKEGELEKR…WNAVITMALI (95 aa)) is the PH domain. Positions 117–138 (KTRQDDESGSPGQHESRMARAP) are disordered.

It belongs to the PHLDA2 family.

It is found in the cytoplasm. The protein localises to the membrane. In terms of biological role, plays a role in regulating placenta growth. May act via its PH domain that competes with other PH domain-containing proteins, thereby preventing their binding to membrane lipids. The chain is Pleckstrin homology-like domain family A member 2 (phlda2) from Salmo salar (Atlantic salmon).